The chain runs to 432 residues: Adenylosuccinate synthetase (432 aa).

GTP contacts are provided by residues 13–19 (GDEGKGK) and 41–43 (GHT). Asp-14 serves as the catalytic Proton acceptor. Residues Asp-14 and Gly-41 each coordinate Mg(2+). IMP-binding positions include 14 to 17 (DEGK), 39 to 42 (NAGH), Thr-130, Arg-144, Gln-225, Thr-240, and Arg-304. Catalysis depends on His-42, which acts as the Proton donor. 300–306 (AVTGRPR) provides a ligand contact to substrate. Residues Arg-306, 332 to 334 (KLD), and 415 to 417 (STG) each bind GTP.

Belongs to the adenylosuccinate synthetase family. As to quaternary structure, homodimer. Mg(2+) is required as a cofactor.

Its subcellular location is the cytoplasm. The catalysed reaction is IMP + L-aspartate + GTP = N(6)-(1,2-dicarboxyethyl)-AMP + GDP + phosphate + 2 H(+). It participates in purine metabolism; AMP biosynthesis via de novo pathway; AMP from IMP: step 1/2. Its function is as follows. Plays an important role in the de novo pathway of purine nucleotide biosynthesis. Catalyzes the first committed step in the biosynthesis of AMP from IMP. The protein is Adenylosuccinate synthetase of Haemophilus influenzae (strain PittEE).